A 535-amino-acid polypeptide reads, in one-letter code: Arylsulfatase K (535 aa).

Positions 1-21 are cleaved as a signal peptide; the sequence is MGSGGPLLLLRGLLLVGAAYC. The Ca(2+) site is built by aspartate 41 and cysteine 81. Cysteine 81 serves as the catalytic Nucleophile. At cysteine 81 the chain carries 3-oxoalanine (Cys). Residue lysine 129 coordinates substrate. Asparagine 194 carries an N-linked (GlcNAc...) asparagine glycan. Residue histidine 252 participates in substrate binding. N-linked (GlcNAc...) asparagine glycosylation is present at asparagine 263. Positions 314 and 315 each coordinate Ca(2+). Asparagine 376, asparagine 414, and asparagine 499 each carry an N-linked (GlcNAc...) asparagine glycan.

The protein belongs to the sulfatase family. Ca(2+) serves as cofactor. The conversion to 3-oxoalanine (also known as C-formylglycine, FGly), of a serine or cysteine residue in prokaryotes and of a cysteine residue in eukaryotes, is critical for catalytic activity.

The protein resides in the secreted. It is found in the lysosome. It carries out the reaction an aryl sulfate + H2O = a phenol + sulfate + H(+). The catalysed reaction is Hydrolysis of the 2-sulfate groups of the 2-O-sulfo-D-glucuronate residues of chondroitin sulfate, heparin and heparitin sulfate.. Catalyzes the hydrolysis of pseudosubstrates such as p-nitrocatechol sulfate and p-nitrophenyl sulfate. Catalyzes the hydrolysis of the 2-sulfate groups of the 2-O-sulfo-D-glucuronate residues of chondroitin sulfate, heparin and heparitin sulfate. Acts selectively on 2-sulfoglucuronate and lacks activity against 2-sulfoiduronate. The sequence is that of Arylsulfatase K (ARSK) from Gallus gallus (Chicken).